The chain runs to 337 residues: Carbonic anhydrase 14 (337 aa).

The first 15 residues, 1–15, serve as a signal peptide directing secretion; sequence MLFSALLLEVIWILA. The Extracellular segment spans residues 16-290; it reads ADGGQHWTYE…AGSSYTTGEM (275 aa). One can recognise an Alpha-carbonic anhydrase domain in the interval 20 to 278; that stretch reads QHWTYEGPHG…LNQRMVFASF (259 aa). Cysteine 40 and cysteine 221 are disulfide-bonded. The active-site Proton donor/acceptor is the histidine 84. Residues histidine 109, histidine 111, and histidine 135 each contribute to the Zn(2+) site. Asparagine 213 carries an N-linked (GlcNAc...) asparagine glycan. 217-218 serves as a coordination point for substrate; the sequence is TT. A helical transmembrane segment spans residues 291 to 311; it reads LSLGVGILVGCLCLLLAVYFI. Topologically, residues 312–337 are cytoplasmic; the sequence is ARKIRKKRLENRKSVVFTSAQATTEA. Serine 325 bears the Phosphoserine mark.

This sequence belongs to the alpha-carbonic anhydrase family. Zn(2+) serves as cofactor. In terms of tissue distribution, high expression in all parts of the central nervous system and lower expression in adult liver, heart, small intestine, colon, kidney, urinary bladder and skeletal muscle.

The protein resides in the membrane. It catalyses the reaction hydrogencarbonate + H(+) = CO2 + H2O. Activated by histamine, L-adrenaline, L- and D-histidine, and L- and D-phenylalanine. Inhibited by coumarins, saccharin, sulfonamide derivatives such as acetazolamide (AZA) and Foscarnet (phosphonoformate trisodium salt). Reversible hydration of carbon dioxide. In Homo sapiens (Human), this protein is Carbonic anhydrase 14 (CA14).